Reading from the N-terminus, the 281-residue chain is Ribonuclease HII (281 aa).

The tract at residues 1–46 (MIRDTKQPIKVPAKPASRSGGKAKTVKPKTIKPKTSAKAAAAKPAS) is disordered. Residues 33–46 (PKTSAKAAAAKPAS) are compositionally biased toward low complexity. The RNase H type-2 domain occupies 73 to 261 (WPIAGCDEAG…VAAAWQKIEG (189 aa)). A divalent metal cation is bound by residues D79, E80, and D170.

The protein belongs to the RNase HII family. Mn(2+) serves as cofactor. Mg(2+) is required as a cofactor.

It is found in the cytoplasm. The enzyme catalyses Endonucleolytic cleavage to 5'-phosphomonoester.. Its function is as follows. Endonuclease that specifically degrades the RNA of RNA-DNA hybrids. This chain is Ribonuclease HII, found in Rhodopseudomonas palustris (strain TIE-1).